A 95-amino-acid chain; its full sequence is Aspartyl/glutamyl-tRNA(Asn/Gln) amidotransferase subunit C (95 aa).

It belongs to the GatC family. Heterotrimer of A, B and C subunits.

The catalysed reaction is L-glutamyl-tRNA(Gln) + L-glutamine + ATP + H2O = L-glutaminyl-tRNA(Gln) + L-glutamate + ADP + phosphate + H(+). It catalyses the reaction L-aspartyl-tRNA(Asn) + L-glutamine + ATP + H2O = L-asparaginyl-tRNA(Asn) + L-glutamate + ADP + phosphate + 2 H(+). Allows the formation of correctly charged Asn-tRNA(Asn) or Gln-tRNA(Gln) through the transamidation of misacylated Asp-tRNA(Asn) or Glu-tRNA(Gln) in organisms which lack either or both of asparaginyl-tRNA or glutaminyl-tRNA synthetases. The reaction takes place in the presence of glutamine and ATP through an activated phospho-Asp-tRNA(Asn) or phospho-Glu-tRNA(Gln). The sequence is that of Aspartyl/glutamyl-tRNA(Asn/Gln) amidotransferase subunit C from Ruthia magnifica subsp. Calyptogena magnifica.